A 184-amino-acid polypeptide reads, in one-letter code: Probable DNA-directed RNA polymerase subunit delta (184 aa).

The region spanning 14 to 81 is the HTH HARE-type domain; it reads LSMIEVARAI…GENVWALRSW (68 aa). Disordered stretches follow at residues 88 to 107 and 118 to 184; these read DEEV…KHHK and GDDD…DEDD. The segment covering 118-164 has biased composition (acidic residues); the sequence is GDDDIIDYDNDDPEDDDLDAATDDSDDDYSDDDSDYDEDNDDADDVL.

The protein belongs to the RpoE family. As to quaternary structure, RNAP is composed of a core of 2 alpha, a beta and a beta' subunits. The core is associated with a delta subunit and one of several sigma factors.

In terms of biological role, participates in both the initiation and recycling phases of transcription. In the presence of the delta subunit, RNAP displays an increased specificity of transcription, a decreased affinity for nucleic acids, and an increased efficiency of RNA synthesis because of enhanced recycling. This is Probable DNA-directed RNA polymerase subunit delta from Lactobacillus acidophilus (strain ATCC 700396 / NCK56 / N2 / NCFM).